The following is a 696-amino-acid chain: Golgi integral membrane protein 4 (696 aa).

The N-myristoyl glycine moiety is linked to residue Gly-2. Residues 2 to 12 (GNGMCSRKQKR) lie on the Cytoplasmic side of the membrane. Residues 13–33 (IFQTLLLLTVVFGFLYGAMLY) form a helical; Signal-anchor for type II membrane protein membrane-spanning segment. The Lumenal segment spans residues 34-696 (YELQTQLRKA…AEKSHRRAEM (663 aa)). Residues 35 to 244 (ELQTQLRKAE…KQLKDTLNRI (210 aa)) adopt a coiled-coil conformation. The interval 38–107 (TQLRKAEAVA…ETLNKGRQDS (70 aa)) is golgi targeting. The tract at residues 80 to 175 (LEHKKAKEDF…QELSKLKETV (96 aa)) is endosome targeting. Disordered regions lie at residues 122-145 (KSQHEELKKQHSDLEEEHRKQGED), 244-391 (IPSL…HARA), and 427-696 (LREH…RAEM). The segment covering 123–145 (SQHEELKKQHSDLEEEHRKQGED) has biased composition (basic and acidic residues). Residues 176–248 (YNLREENRQL…DTLNRIPSLR (73 aa)) are golgi targeting. Residues 254-269 (EQQNVTQVAHSPQGYN) show a composition bias toward polar residues. An N-linked (GlcNAc...) asparagine glycan is attached at Asn-257. 5 stretches are compositionally biased toward basic and acidic residues: residues 271–281 (AREKPTREVQE), 298–313 (RAEDTKLYAPTHKEAE), 324–343 (EVERREPEEHQVEEEHRKAL), 355–364 (EHLEEEHDPS), and 370–380 (REWKEQHEQRE). Residue Ser-364 is modified to Phosphoserine. The span at 436–453 (QQRLQGHLLRQQEQQQQQ) shows a compositional bias: low complexity. Composition is skewed to basic and acidic residues over residues 464-476 (AELEEGRPQHQEQ) and 505-545 (AYER…RAAV). Position 538 is a phosphoserine (Ser-538). The span at 604–626 (QQEDNVDEQYQEEAEEEVQEDLT) shows a compositional bias: acidic residues. Tyr-613 carries the phosphotyrosine modification. Thr-626 carries the phosphothreonine modification. Composition is skewed to basic and acidic residues over residues 627–638 (EEKKRELEHNAE) and 661–672 (RDDNRPKGREEH). Tyr-673 is modified (phosphotyrosine). Residues 673-683 (YEEEEEEEEDG) show a composition bias toward acidic residues.

The protein belongs to the GOLIM4 family. Phosphorylated probably by c-AMP-dependent kinases in its lumenal part. In terms of processing, O-glycosylated; modified by sialic acid residues. Post-translationally, N-glycosylated; N-glycans are probably of the complex type and modified by sialic acid residues.

It is found in the golgi apparatus. The protein resides in the golgi stack membrane. It localises to the endosome membrane. Its subcellular location is the membrane. In terms of biological role, plays a role in endosome to Golgi protein trafficking; mediates protein transport along the late endosome-bypass pathway from the early endosome to the Golgi. The sequence is that of Golgi integral membrane protein 4 (GOLIM4) from Homo sapiens (Human).